The following is a 358-amino-acid chain: Putative glycylpeptide N-tetradecanoyltransferase (358 aa).

Belongs to the NMT family.

The catalysed reaction is N-terminal glycyl-[protein] + tetradecanoyl-CoA = N-tetradecanoylglycyl-[protein] + CoA + H(+). In terms of biological role, adds a myristoyl group to the N-terminal glycine residue of certain proteins. The sequence is that of Putative glycylpeptide N-tetradecanoyltransferase from Acanthamoeba polyphaga (Amoeba).